The primary structure comprises 1024 residues: Beta-galactosidase (1024 aa).

Residues asparagine 103 and aspartate 202 each coordinate substrate. Aspartate 202 lines the Na(+) pocket. Residues glutamate 417, histidine 419, and glutamate 462 each coordinate Mg(2+). Residues glutamate 462 and 538 to 541 (EYAH) each bind substrate. Glutamate 462 serves as the catalytic Proton donor. Glutamate 538 (nucleophile) is an active-site residue. Mg(2+) is bound at residue asparagine 598. Residues phenylalanine 602 and asparagine 605 each contribute to the Na(+) site. Substrate-binding residues include asparagine 605 and tryptophan 1000.

This sequence belongs to the glycosyl hydrolase 2 family. Homotetramer. Requires Mg(2+) as cofactor. Na(+) serves as cofactor.

It catalyses the reaction Hydrolysis of terminal non-reducing beta-D-galactose residues in beta-D-galactosides.. The protein is Beta-galactosidase of Escherichia coli (strain SMS-3-5 / SECEC).